The following is a 681-amino-acid chain: Conserved oligomeric Golgi complex subunit 2 (681 aa).

This sequence belongs to the COG2 family. Component of the conserved oligomeric Golgi complex which is composed of eight different subunits and is required for normal Golgi morphology and localization.

It is found in the golgi apparatus membrane. Required for normal Golgi morphology and function. This is Conserved oligomeric Golgi complex subunit 2 (cogc-2) from Caenorhabditis elegans.